The sequence spans 862 residues: Probable linoleate 9S-lipoxygenase 5 (862 aa).

The region spanning 36-161 (NDVNASLLDG…KYKSERIFFA (126 aa)) is the PLAT domain. In terms of domain architecture, Lipoxygenase spans 164–862 (AYLPGETPEP…GKGIPNSVSI (699 aa)). Fe cation is bound by residues H523, H528, H714, N718, and I862.

This sequence belongs to the lipoxygenase family. As to quaternary structure, monomer. Requires Fe cation as cofactor. As to expression, not detected in leaves, stems, flowers, roots, tubers and stolons during normal growth and development.

It localises to the cytoplasm. The catalysed reaction is (9Z,12Z)-octadecadienoate + O2 = (9S)-hydroperoxy-(10E,12Z)-octadecadienoate. The protein operates within lipid metabolism; oxylipin biosynthesis. In terms of biological role, plant lipoxygenases may be involved in a number of diverse aspects of plant physiology including growth and development, pest resistance, and senescence or responses to wounding. May contribute to cell death during the hypersensitive response (HR) by the massive production of free fatty acid hydroperoxides. Catalyzes the hydroperoxidation of lipids containing a cis,cis-1,4-pentadiene structure. The sequence is that of Probable linoleate 9S-lipoxygenase 5 (LOX1.5) from Solanum tuberosum (Potato).